A 456-amino-acid polypeptide reads, in one-letter code: tRNA-2-methylthio-N(6)-dimethylallyladenosine synthase (456 aa).

Positions 18–136 (EFFFIQTFGC…FPEYLHRVQV (119 aa)) constitute an MTTase N-terminal domain. Residues cysteine 27, cysteine 63, cysteine 97, cysteine 173, cysteine 177, and cysteine 180 each coordinate [4Fe-4S] cluster. The region spanning 159–391 (RKSNVKAFVT…AVNEGIVVGN (233 aa)) is the Radical SAM core domain. In terms of domain architecture, TRAM spans 392–455 (KAAEGKIYEV…SFSLVGEVVE (64 aa)).

This sequence belongs to the methylthiotransferase family. MiaB subfamily. In terms of assembly, monomer. [4Fe-4S] cluster is required as a cofactor.

The protein resides in the cytoplasm. The catalysed reaction is N(6)-dimethylallyladenosine(37) in tRNA + (sulfur carrier)-SH + AH2 + 2 S-adenosyl-L-methionine = 2-methylsulfanyl-N(6)-dimethylallyladenosine(37) in tRNA + (sulfur carrier)-H + 5'-deoxyadenosine + L-methionine + A + S-adenosyl-L-homocysteine + 2 H(+). Catalyzes the methylthiolation of N6-(dimethylallyl)adenosine (i(6)A), leading to the formation of 2-methylthio-N6-(dimethylallyl)adenosine (ms(2)i(6)A) at position 37 in tRNAs that read codons beginning with uridine. In Clostridium botulinum (strain Alaska E43 / Type E3), this protein is tRNA-2-methylthio-N(6)-dimethylallyladenosine synthase.